The primary structure comprises 418 residues: Imidazolonepropionase (418 aa).

Fe(3+)-binding residues include His80 and His82. Zn(2+) is bound by residues His80 and His82. Residues Arg89, Tyr152, and His185 each contribute to the 4-imidazolone-5-propanoate site. Tyr152 is an N-formimidoyl-L-glutamate binding site. Residue His250 coordinates Fe(3+). His250 contacts Zn(2+). Gln253 serves as a coordination point for 4-imidazolone-5-propanoate. Asp325 lines the Fe(3+) pocket. Asp325 is a Zn(2+) binding site. N-formimidoyl-L-glutamate is bound by residues Asn327 and Gly329. 4-imidazolone-5-propanoate is bound at residue Ser330.

It belongs to the metallo-dependent hydrolases superfamily. HutI family. Zn(2+) is required as a cofactor. Fe(3+) serves as cofactor.

The protein resides in the cytoplasm. It catalyses the reaction 4-imidazolone-5-propanoate + H2O = N-formimidoyl-L-glutamate. It functions in the pathway amino-acid degradation; L-histidine degradation into L-glutamate; N-formimidoyl-L-glutamate from L-histidine: step 3/3. Catalyzes the hydrolytic cleavage of the carbon-nitrogen bond in imidazolone-5-propanoate to yield N-formimidoyl-L-glutamate. It is the third step in the universal histidine degradation pathway. In Solibacter usitatus (strain Ellin6076), this protein is Imidazolonepropionase.